The sequence spans 223 residues: Deoxyribose-phosphate aldolase (223 aa).

Catalysis depends on aspartate 89, which acts as the Proton donor/acceptor. The active-site Schiff-base intermediate with acetaldehyde is the lysine 152. Catalysis depends on lysine 181, which acts as the Proton donor/acceptor.

The protein belongs to the DeoC/FbaB aldolase family. DeoC type 1 subfamily.

It is found in the cytoplasm. The enzyme catalyses 2-deoxy-D-ribose 5-phosphate = D-glyceraldehyde 3-phosphate + acetaldehyde. It participates in carbohydrate degradation; 2-deoxy-D-ribose 1-phosphate degradation; D-glyceraldehyde 3-phosphate and acetaldehyde from 2-deoxy-alpha-D-ribose 1-phosphate: step 2/2. Catalyzes a reversible aldol reaction between acetaldehyde and D-glyceraldehyde 3-phosphate to generate 2-deoxy-D-ribose 5-phosphate. This Listeria monocytogenes serotype 4b (strain F2365) protein is Deoxyribose-phosphate aldolase.